Here is a 271-residue protein sequence, read N- to C-terminus: Transcription factor PU.1 (271 aa).

The disordered stretch occupies residues 124–164; the sequence is LSPAHQQSSDEEEGERQSPPLEVSDGEADGLEPGPGLLHGE. 2 positions are modified to phosphoserine: serine 141 and serine 147. Positions 154–164 are enriched in low complexity; sequence LEPGPGLLHGE. The segment at residues 171-254 is a DNA-binding region (ETS); sequence IRLYQFLLDL…VKKKLTYQFS (84 aa). The DNA site is built by lysine 218, arginine 231, arginine 234, and lysine 244.

Belongs to the ETS family. Binds DNA as a monomer. Can form homomers. Directly interacts with CEBPD/NF-IL6-beta; this interaction does not affect DNA-binding properties of each partner. Interacts with NONO/p54(nrb). Interacts with RUNX1/AML1. Interacts with GFI1; the interaction represses SPI1 transcriptional activity, hence blocks SPI1-induced macrophage differentiation of myeloid progenitor cells. Interacts with CEBPE. Interacts with IRF4/Pip and IRF8. Interacts with JUN. Interacts with RB1. Interacts with TBP.

The protein localises to the nucleus. With respect to regulation, transcriptional activity at macrophage-specific genes is inhibited by interaction with GFI1, which results in the inhibition of SPI1-induced macrophage differentiation of myeloid progenitor cells, but not that of the granulocyte lineage. Functionally, pioneer transcription factor, which controls hematopoietic cell fate by decompacting stem cell heterochromatin and allowing other transcription factors to enter otherwise inaccessible genomic sites. Once in open chromatin, can directly control gene expression by binding genetic regulatory elements and can also more broadly influence transcription by recruiting transcription factors, such as interferon regulatory factors (IRFs), to otherwise inaccessible genomic regions. Transcriptionally activates genes important for myeloid and lymphoid lineages, such as CSF1R or FCER1A. Transcriptional activation from certain promoters, possibly containing low affinity binding sites, is achieved cooperatively with other transcription factors. FCER1A transactivation is achieved in cooperation with GATA1. May be particularly important for the pro- to pre-B cell transition. Binds (via the ETS domain) onto the purine-rich DNA core sequence 5'-GAGGAA-3', also known as the PU-box. In vitro can bind RNA and interfere with pre-mRNA splicing. The polypeptide is Transcription factor PU.1 (Spi1) (Rattus norvegicus (Rat)).